A 253-amino-acid polypeptide reads, in one-letter code: Imidazole glycerol phosphate synthase subunit HisF (253 aa).

Catalysis depends on residues Asp11 and Asp130.

The protein belongs to the HisA/HisF family. In terms of assembly, heterodimer of HisH and HisF.

It localises to the cytoplasm. It catalyses the reaction 5-[(5-phospho-1-deoxy-D-ribulos-1-ylimino)methylamino]-1-(5-phospho-beta-D-ribosyl)imidazole-4-carboxamide + L-glutamine = D-erythro-1-(imidazol-4-yl)glycerol 3-phosphate + 5-amino-1-(5-phospho-beta-D-ribosyl)imidazole-4-carboxamide + L-glutamate + H(+). The protein operates within amino-acid biosynthesis; L-histidine biosynthesis; L-histidine from 5-phospho-alpha-D-ribose 1-diphosphate: step 5/9. Functionally, IGPS catalyzes the conversion of PRFAR and glutamine to IGP, AICAR and glutamate. The HisF subunit catalyzes the cyclization activity that produces IGP and AICAR from PRFAR using the ammonia provided by the HisH subunit. The polypeptide is Imidazole glycerol phosphate synthase subunit HisF (Dehalococcoides mccartyi (strain CBDB1)).